A 407-amino-acid chain; its full sequence is Multifunctional CCA protein (407 aa).

ATP-binding residues include glycine 8 and arginine 11. 2 residues coordinate CTP: glycine 8 and arginine 11. Residues aspartate 21 and aspartate 23 each coordinate Mg(2+). ATP is bound by residues arginine 91, arginine 137, and arginine 140. 3 residues coordinate CTP: arginine 91, arginine 137, and arginine 140. One can recognise an HD domain in the interval 228–329; sequence SGIHTLMVAQ…IKIFDKMDVW (102 aa).

Belongs to the tRNA nucleotidyltransferase/poly(A) polymerase family. Bacterial CCA-adding enzyme type 1 subfamily. In terms of assembly, monomer. Can also form homodimers and oligomers. It depends on Mg(2+) as a cofactor. Ni(2+) is required as a cofactor.

It carries out the reaction a tRNA precursor + 2 CTP + ATP = a tRNA with a 3' CCA end + 3 diphosphate. The enzyme catalyses a tRNA with a 3' CCA end + 2 CTP + ATP = a tRNA with a 3' CCACCA end + 3 diphosphate. Its function is as follows. Catalyzes the addition and repair of the essential 3'-terminal CCA sequence in tRNAs without using a nucleic acid template. Adds these three nucleotides in the order of C, C, and A to the tRNA nucleotide-73, using CTP and ATP as substrates and producing inorganic pyrophosphate. tRNA 3'-terminal CCA addition is required both for tRNA processing and repair. Also involved in tRNA surveillance by mediating tandem CCA addition to generate a CCACCA at the 3' terminus of unstable tRNAs. While stable tRNAs receive only 3'-terminal CCA, unstable tRNAs are marked with CCACCA and rapidly degraded. In Aliivibrio fischeri (strain MJ11) (Vibrio fischeri), this protein is Multifunctional CCA protein.